Reading from the N-terminus, the 122-residue chain is uncharacterized protein (122 aa).

This is an uncharacterized protein from Dictyostelium discoideum (Social amoeba).